Consider the following 365-residue polypeptide: Histidinol-phosphate aminotransferase (365 aa).

Residues 1–22 are disordered; it reads MSRPVPNPGILDIAPYTPGKSP. Position 221 is an N6-(pyridoxal phosphate)lysine (Lys-221).

The protein belongs to the class-II pyridoxal-phosphate-dependent aminotransferase family. Histidinol-phosphate aminotransferase subfamily. In terms of assembly, homodimer. Pyridoxal 5'-phosphate serves as cofactor.

The enzyme catalyses L-histidinol phosphate + 2-oxoglutarate = 3-(imidazol-4-yl)-2-oxopropyl phosphate + L-glutamate. The protein operates within amino-acid biosynthesis; L-histidine biosynthesis; L-histidine from 5-phospho-alpha-D-ribose 1-diphosphate: step 7/9. This chain is Histidinol-phosphate aminotransferase, found in Rhodopseudomonas palustris (strain BisA53).